The sequence spans 614 residues: Bifunctional enzyme CysN/CysC (614 aa).

The segment at 1-441 (MTTLLRLATA…SLVTAQDRPP (441 aa)) is sulfate adenylyltransferase. Residues 2–217 (TTLLRLATAG…DVYIAGDRNM (216 aa)) form the tr-type G domain. The tract at residues 11 to 18 (GSVDDGKS) is G1. A GTP-binding site is contributed by 11–18 (GSVDDGKS). The tract at residues 67–71 (GITID) is G2. Residues 88–91 (DTPG) form a G3 region. Residues 88-92 (DTPGH) and 143-146 (NKMD) each bind GTP. The segment at 143–146 (NKMD) is G4. The tract at residues 180 to 182 (SAL) is G5. The adenylyl-sulfate kinase stretch occupies residues 442–614 (RGKTVWFTGL…EVIDLLESSS (173 aa)). 450–457 (GLSGSGKS) contacts ATP. The active-site Phosphoserine intermediate is S524. The interval 578–597 (GIDSPYQRPKNPDLRLTPDR) is disordered. Positions 587-597 (KNPDLRLTPDR) are enriched in basic and acidic residues.

In the C-terminal section; belongs to the APS kinase family. The protein in the N-terminal section; belongs to the TRAFAC class translation factor GTPase superfamily. Classic translation factor GTPase family. CysN/NodQ subfamily. Heterodimer composed of CysD, the smaller subunit, and CysNC.

It carries out the reaction sulfate + ATP + H(+) = adenosine 5'-phosphosulfate + diphosphate. The catalysed reaction is adenosine 5'-phosphosulfate + ATP = 3'-phosphoadenylyl sulfate + ADP + H(+). The protein operates within sulfur metabolism; hydrogen sulfide biosynthesis; sulfite from sulfate: step 1/3. Its pathway is sulfur metabolism; hydrogen sulfide biosynthesis; sulfite from sulfate: step 2/3. Functionally, with CysD forms the ATP sulfurylase (ATPS) that catalyzes the adenylation of sulfate producing adenosine 5'-phosphosulfate (APS) and diphosphate, the first enzymatic step in sulfur assimilation pathway. APS synthesis involves the formation of a high-energy phosphoric-sulfuric acid anhydride bond driven by GTP hydrolysis by CysN coupled to ATP hydrolysis by CysD. In terms of biological role, APS kinase catalyzes the synthesis of activated sulfate. The sequence is that of Bifunctional enzyme CysN/CysC (cysNC) from Mycobacterium tuberculosis (strain CDC 1551 / Oshkosh).